A 263-amino-acid chain; its full sequence is L-histidine 2-aminobutanoyltransferase (263 aa).

Belongs to the methyltransferase superfamily. CntL family.

It catalyses the reaction L-histidine + S-adenosyl-L-methionine = (2S)-2-amino-4-{[(1S)-1-carboxy-2-(1H-imidazol-4-yl)ethyl]amino}butanoate + S-methyl-5'-thioadenosine + H(+). Its function is as follows. Catalyzes the nucleophilic attack of one alpha-aminobutanoate moiety from SAM onto L-histidine to produce the intermediate (2S)-2-amino-4-{[(1S)-1-carboxy-2-(1H-imidazol-4-yl)ethyl]amino}butanoate. Functions in the biosynthesis of the metallophore pseudopaline, which is involved in the acquisition of nickel and zinc, and thus enables bacterial growth inside the host, where metal access is limited. Therefore, this enzyme probably contributes to Pseudomonas virulence. Appears to be specific for L-histidine as substrate. The chain is L-histidine 2-aminobutanoyltransferase from Pseudomonas aeruginosa (strain ATCC 15692 / DSM 22644 / CIP 104116 / JCM 14847 / LMG 12228 / 1C / PRS 101 / PAO1).